Reading from the N-terminus, the 193-residue chain is UPF0314 protein Pden_1914 (193 aa).

Transmembrane regions (helical) follow at residues 13–33 (APYWATFLVIVLAALWLLWIG), 62–82 (WYTPSHVIHGLVFYAALWLVA), 148–168 (LPVWASVAIVIGFEALTTWLI), and 172–192 (LALNVLMLLWPLEAVRGWQAA).

Belongs to the UPF0314 family.

The protein resides in the cell membrane. The protein is UPF0314 protein Pden_1914 of Paracoccus denitrificans (strain Pd 1222).